The following is a 1200-amino-acid chain: Zinc finger protein 804A (1200 aa).

The segment at 57–81 adopts a C2H2-type zinc-finger fold; sequence FYCELCDKQYYKHQEFDNHINSYDH. Disordered regions lie at residues 252 to 280, 343 to 367, 582 to 687, 727 to 777, 799 to 828, and 874 to 949; these read STSH…PEAM, DGPV…RTSA, HWFH…NCGG, EDDG…SDES, QPKK…NYPM, and PYNP…TNPE. A compositionally biased stretch (basic residues) spans 585–603; the sequence is HKSRRKKKRRKLCRYHPGK. Basic and acidic residues predominate over residues 604-666; it reads SSKEPEGSGK…ASTHLGEKET (63 aa). Composition is skewed to polar residues over residues 667–687 and 732–756; these read MNTT…NCGG and LASQ…SLTN. The span at 800–811 shows a compositional bias: basic residues; that stretch reads PKKKRRRKRSRL. The span at 891–944 shows a compositional bias: polar residues; sequence TETTPCDSSQTSNDLATPVNVTRDPSNSTTDNTLLEHNQRSQTTNSNEKQTPFK.

The protein is Zinc finger protein 804A (Znf804a) of Mus musculus (Mouse).